Consider the following 178-residue polypeptide: Histone deacetylase complex subunit SAP30L (178 aa).

Cystine bridges form between Cys24-Cys25 and Cys33-Cys69. The Atypical zinc finger occupies 24 to 72 (CCLIEDAERCGRPAGNASFSKRIQKSISQRKLKLDIDKSVRHLYICDFH). The disordered stretch occupies residues 80 to 99 (RNKRKRKTSDDGGESPDHEV). The short motif at 81–86 (NKRKRK) is the Nuclear localization signal (NLS) element. Positions 83–85 (RKR) are important for DNA and phosphoinositide binding.

It belongs to the SAP30 family. Interacts with components of the histone deacetylase complex sin3a, hdac1 and hdac2. Binds histones and nucleosomes. As to expression, detected in embryos at 2dpf (at protein level). Widely expressed during embryogenesis and in adults.

The protein resides in the nucleus. It is found in the nucleolus. Its function is as follows. Functions as a transcription repressor, probably via its interaction with histone deacetylase complexes. Required for normal expression of numerous target genes. Involved in the functional recruitment of the class 1 Sin3-histone deacetylase complex (HDAC) to the nucleolus. Binds DNA, apparently without sequence-specificity, and bends bound double-stranded DNA. Binds phosphoinositol phosphates (phosphoinositol 3-phosphate, phosphoinositol 4-phosphate and phosphoinositol 5-phosphate) via the same basic sequence motif that mediates DNA binding and nuclear import. The protein is Histone deacetylase complex subunit SAP30L (sap30l) of Danio rerio (Zebrafish).